A 137-amino-acid polypeptide reads, in one-letter code: Small ribosomal subunit protein uS12 (137 aa).

Positions 1-25 (MPTINQLVRQGRKSKTYKSDSPALS) are disordered. Asp-102 carries the 3-methylthioaspartic acid modification.

The protein belongs to the universal ribosomal protein uS12 family. In terms of assembly, part of the 30S ribosomal subunit. Contacts proteins S8 and S17. May interact with IF1 in the 30S initiation complex.

With S4 and S5 plays an important role in translational accuracy. In terms of biological role, interacts with and stabilizes bases of the 16S rRNA that are involved in tRNA selection in the A site and with the mRNA backbone. Located at the interface of the 30S and 50S subunits, it traverses the body of the 30S subunit contacting proteins on the other side and probably holding the rRNA structure together. The combined cluster of proteins S8, S12 and S17 appears to hold together the shoulder and platform of the 30S subunit. The chain is Small ribosomal subunit protein uS12 from Finegoldia magna (strain ATCC 29328 / DSM 20472 / WAL 2508) (Peptostreptococcus magnus).